The sequence spans 417 residues: Tyrosine--tRNA ligase (417 aa).

Tyr39 serves as a coordination point for L-tyrosine. The 'HIGH' region motif lies at 44–53 (CTAPSLHVGH). Residues Tyr176 and Gln180 each coordinate L-tyrosine. The 'KMSKS' region signature appears at 236–240 (KMGKT). Lys239 serves as a coordination point for ATP. In terms of domain architecture, S4 RNA-binding spans 350 to 417 (AGVLALFVKA…KKRHVLLRPA (68 aa)).

It belongs to the class-I aminoacyl-tRNA synthetase family. TyrS type 1 subfamily. In terms of assembly, homodimer.

It is found in the cytoplasm. The catalysed reaction is tRNA(Tyr) + L-tyrosine + ATP = L-tyrosyl-tRNA(Tyr) + AMP + diphosphate + H(+). Functionally, catalyzes the attachment of tyrosine to tRNA(Tyr) in a two-step reaction: tyrosine is first activated by ATP to form Tyr-AMP and then transferred to the acceptor end of tRNA(Tyr). The sequence is that of Tyrosine--tRNA ligase from Nitrobacter winogradskyi (strain ATCC 25391 / DSM 10237 / CIP 104748 / NCIMB 11846 / Nb-255).